Here is a 451-residue protein sequence, read N- to C-terminus: uncharacterized protein (451 aa).

The FAD-binding PCMH-type domain maps to 29–204 (LERYPDIIVF…TSMTFKAVPI (176 aa)). Residue histidine 66 is modified to Pros-8alpha-FAD histidine.

The protein belongs to the oxygen-dependent FAD-linked oxidoreductase family. FAD serves as cofactor.

This is an uncharacterized protein from Bacillus subtilis (strain 168).